The following is a 238-amino-acid chain: 1-(5-phosphoribosyl)-5-[(5-phosphoribosylamino)methylideneamino] imidazole-4-carboxamide isomerase (238 aa).

Catalysis depends on aspartate 8, which acts as the Proton acceptor. The active-site Proton donor is aspartate 129.

Belongs to the HisA/HisF family.

Its subcellular location is the cytoplasm. It carries out the reaction 1-(5-phospho-beta-D-ribosyl)-5-[(5-phospho-beta-D-ribosylamino)methylideneamino]imidazole-4-carboxamide = 5-[(5-phospho-1-deoxy-D-ribulos-1-ylimino)methylamino]-1-(5-phospho-beta-D-ribosyl)imidazole-4-carboxamide. Its pathway is amino-acid biosynthesis; L-histidine biosynthesis; L-histidine from 5-phospho-alpha-D-ribose 1-diphosphate: step 4/9. This chain is 1-(5-phosphoribosyl)-5-[(5-phosphoribosylamino)methylideneamino] imidazole-4-carboxamide isomerase, found in Clostridium kluyveri (strain NBRC 12016).